A 245-amino-acid polypeptide reads, in one-letter code: 2,3-bisphosphoglycerate-dependent phosphoglycerate mutase (245 aa).

Substrate contacts are provided by residues R8–N15, T21–G22, R60, E87–Y90, K98, R114–R115, and G183–N184. Catalysis depends on H9, which acts as the Tele-phosphohistidine intermediate. E87 functions as the Proton donor/acceptor in the catalytic mechanism.

This sequence belongs to the phosphoglycerate mutase family. BPG-dependent PGAM subfamily.

The catalysed reaction is (2R)-2-phosphoglycerate = (2R)-3-phosphoglycerate. The protein operates within carbohydrate degradation; glycolysis; pyruvate from D-glyceraldehyde 3-phosphate: step 3/5. Functionally, catalyzes the interconversion of 2-phosphoglycerate and 3-phosphoglycerate. The polypeptide is 2,3-bisphosphoglycerate-dependent phosphoglycerate mutase (Bacillus thuringiensis (strain Al Hakam)).